A 188-amino-acid polypeptide reads, in one-letter code: GMP synthase [glutamine-hydrolyzing] subunit A (188 aa).

Residues 3–188 (PLYVVNNYGQ…FSICTGQNKG (186 aa)) enclose the Glutamine amidotransferase type-1 domain. Residue C75 is the Nucleophile of the active site. Catalysis depends on residues H162 and E164.

Heterodimer composed of a glutamine amidotransferase subunit (A) and a GMP-binding subunit (B).

The enzyme catalyses XMP + L-glutamine + ATP + H2O = GMP + L-glutamate + AMP + diphosphate + 2 H(+). The protein operates within purine metabolism; GMP biosynthesis; GMP from XMP (L-Gln route): step 1/1. Functionally, catalyzes the synthesis of GMP from XMP. The protein is GMP synthase [glutamine-hydrolyzing] subunit A of Methanospirillum hungatei JF-1 (strain ATCC 27890 / DSM 864 / NBRC 100397 / JF-1).